The following is a 131-amino-acid chain: Small ribosomal subunit protein uS9 (131 aa).

It belongs to the universal ribosomal protein uS9 family.

This chain is Small ribosomal subunit protein uS9, found in Mycoplasmopsis synoviae (strain 53) (Mycoplasma synoviae).